The sequence spans 599 residues: Elongation factor 4 (599 aa).

The tr-type G domain maps to 2 to 184 (KNIRNFSIIA…RLVRDIPPPE (183 aa)). GTP contacts are provided by residues 14-19 (DHGKST) and 131-134 (NKID).

This sequence belongs to the TRAFAC class translation factor GTPase superfamily. Classic translation factor GTPase family. LepA subfamily.

Its subcellular location is the cell inner membrane. The catalysed reaction is GTP + H2O = GDP + phosphate + H(+). In terms of biological role, required for accurate and efficient protein synthesis under certain stress conditions. May act as a fidelity factor of the translation reaction, by catalyzing a one-codon backward translocation of tRNAs on improperly translocated ribosomes. Back-translocation proceeds from a post-translocation (POST) complex to a pre-translocation (PRE) complex, thus giving elongation factor G a second chance to translocate the tRNAs correctly. Binds to ribosomes in a GTP-dependent manner. The protein is Elongation factor 4 of Escherichia coli O8 (strain IAI1).